Reading from the N-terminus, the 131-residue chain is UPF0251 protein MMP0619 (131 aa).

It belongs to the UPF0251 family.

The polypeptide is UPF0251 protein MMP0619 (Methanococcus maripaludis (strain DSM 14266 / JCM 13030 / NBRC 101832 / S2 / LL)).